Reading from the N-terminus, the 362-residue chain is Tyrosyl-DNA phosphodiesterase 2 (362 aa).

M1 carries the N-acetylmethionine modification. A disordered region spans residues 1–20 (MELGSCLEGGREAAEEEGEP). Residues K23 and K82 each participate in a glycyl lysine isopeptide (Lys-Gly) (interchain with G-Cter in SUMO2) cross-link. Residues 87–109 (LTNEETTDSTTSKISPSEDTQQE) form a disordered region. T88 and T92 each carry phosphothreonine; by ACVR1B. Residues 94 to 109 (DSTTSKISPSEDTQQE) are compositionally biased toward polar residues. At S95 the chain carries Phosphoserine. Residues 120–124 (NIDGL) form an interaction with 5' end of substrate DNA region. D122 and E152 together coordinate Mg(2+). The segment at 226 to 231 (HLESTR) is interaction with 5' end of substrate DNA. D262 serves as the catalytic Proton donor/acceptor. Positions 264–266 (NLR) are interaction with 5' end of substrate DNA.

Belongs to the CCR4/nocturin family. Interacts with TRAF2, TRAF3, TRAF5, TRAF6, TNFRSF8/CD30, TNFRSF5/CD40, TNFRSF1B/TNF-R75, ETS1, ETS2, FLI1, SMAD3 and ACVR1B/ALK4. In terms of assembly, (Microbial infection) Interacts with Hantaan hantavirus nucleoprotein. As to quaternary structure, (Microbial infection) Interacts with Seoul hantavirus nucleoprotein. Mg(2+) serves as cofactor. Mn(2+) is required as a cofactor. Post-translationally, ubiquitinated by TRAF6. As to expression, widely expressed. Highly expressed in various brain regions, including the frontal and occipital lobes, the hippocampus, the striatum and the cerebellum.

It localises to the nucleus. Its subcellular location is the PML body. The protein localises to the nucleolus. The protein resides in the cytoplasm. Functionally, DNA repair enzyme that can remove a variety of covalent adducts from DNA through hydrolysis of a 5'-phosphodiester bond, giving rise to DNA with a free 5' phosphate. Catalyzes the hydrolysis of dead-end complexes between DNA and the topoisomerase 2 (TOP2) active site tyrosine residue. The 5'-tyrosyl DNA phosphodiesterase activity can enable the repair of TOP2-induced DNA double-strand breaks/DSBs without the need for nuclease activity, creating a 'clean' DSB with 5'-phosphate termini that are ready for ligation. Thereby, protects the transcription of many genes involved in neurological development and maintenance from the abortive activity of TOP2. Hydrolyzes 5'-phosphoglycolates on protruding 5' ends on DSBs due to DNA damage by radiation and free radicals. Has preference for single-stranded DNA or duplex DNA with a 4 base pair overhang as substrate. Acts as a regulator of ribosome biogenesis following stress. Also has 3'-tyrosyl DNA phosphodiesterase activity, but less efficiently and much slower than TDP1. Constitutes the major if not only 5'-tyrosyl-DNA phosphodiesterase in cells. Also acts as an adapter by participating in the specific activation of MAP3K7/TAK1 in response to TGF-beta: associates with components of the TGF-beta receptor-TRAF6-TAK1 signaling module and promotes their ubiquitination dependent complex formation. Involved in non-canonical TGF-beta induced signaling routes. May also act as a negative regulator of ETS1 and may inhibit NF-kappa-B activation. In terms of biological role, (Microbial infection) Used by picornaviruses to remove the small polypeptide, VPg (virus Protein genome-linked, the primer for viral RNA synthesis), from the genomic RNA of the virus. Acts as a 5'-tyrosyl RNA phosphodiesterase and cleaves the covalent VPg-Tyr-RNA bond. This cleavage would play a role in viral replication and occur in viral replication vesicles, but would not act on viral mRNA. The protein is Tyrosyl-DNA phosphodiesterase 2 of Homo sapiens (Human).